The primary structure comprises 269 residues: Phosphonoacetaldehyde hydrolase (269 aa).

Asp-9 serves as the catalytic Nucleophile. Positions 9 and 11 each coordinate Mg(2+). Lys-50 functions as the Schiff-base intermediate with substrate in the catalytic mechanism. Asp-184 contacts Mg(2+).

The protein belongs to the HAD-like hydrolase superfamily. PhnX family. In terms of assembly, homodimer. Mg(2+) serves as cofactor.

It carries out the reaction phosphonoacetaldehyde + H2O = acetaldehyde + phosphate + H(+). Functionally, involved in phosphonate degradation. The polypeptide is Phosphonoacetaldehyde hydrolase (Lysinibacillus sphaericus (strain C3-41)).